A 144-amino-acid polypeptide reads, in one-letter code: Bacilliredoxin BC_2157 (144 aa).

It belongs to the bacilliredoxin family.

This chain is Bacilliredoxin BC_2157, found in Bacillus cereus (strain ATCC 14579 / DSM 31 / CCUG 7414 / JCM 2152 / NBRC 15305 / NCIMB 9373 / NCTC 2599 / NRRL B-3711).